Reading from the N-terminus, the 216-residue chain is Adenylate kinase (216 aa).

10–15 (GAGKGT) is an ATP binding site. An NMP region spans residues 30–59 (STGDIFRANIKEKTPLGIEAKRYIDNGQLV). AMP is bound by residues threonine 31, arginine 36, 57 to 59 (QLV), 85 to 88 (GFPR), and glutamine 92. Positions 126–163 (GRRVCTSCGASYHIRFNPPKIEGKCDICDNELIQRKDD) are LID. An ATP-binding site is contributed by arginine 127. Residues cysteine 130 and cysteine 133 each contribute to the Zn(2+) site. ATP is bound at residue 136 to 137 (SY). Residues cysteine 150 and cysteine 153 each contribute to the Zn(2+) site. 2 residues coordinate AMP: arginine 160 and arginine 171. ATP is bound at residue glutamate 199.

Belongs to the adenylate kinase family. In terms of assembly, monomer.

Its subcellular location is the cytoplasm. It carries out the reaction AMP + ATP = 2 ADP. It functions in the pathway purine metabolism; AMP biosynthesis via salvage pathway; AMP from ADP: step 1/1. Functionally, catalyzes the reversible transfer of the terminal phosphate group between ATP and AMP. Plays an important role in cellular energy homeostasis and in adenine nucleotide metabolism. This chain is Adenylate kinase, found in Clostridium botulinum (strain ATCC 19397 / Type A).